The primary structure comprises 117 residues: Toxin CSTX-8 (117 aa).

The N-terminal stretch at 1 to 20 is a signal peptide; the sequence is MKVLVICAVLFLAIFSNSSA. Positions 21 to 47 are excised as a propeptide; sequence ETEDDFLEDESFQADDVIPFLASEQVR. Disulfide bonds link Cys-50–Cys-65, Cys-57–Cys-74, Cys-64–Cys-95, and Cys-76–Cys-93. Residues 82–87 constitute a propeptide that is removed on maturation; it reads RSETDR. Position 116 is a threonine amide (Thr-116).

This sequence belongs to the neurotoxin 19 (CSTX) family. 12 subfamily. In terms of assembly, heterodimer of A and B chains; disulfide-linked. Interacts with CSTX-1 (AC P81694), and with CSTX-9 (AC P58604). Expressed by the venom gland.

It is found in the secreted. Its subcellular location is the target cell membrane. Its function is as follows. Synergistic toxin that induces or increases a cytolytic effect when combined with CSTX-1 (AC P81694) or CSTX-9 (AC P58604). When alone, has a weak insecticidal activity, with an unknown molecular target. This chain is Toxin CSTX-8, found in Cupiennius salei (American wandering spider).